Here is a 246-residue protein sequence, read N- to C-terminus: 3-deoxy-manno-octulosonate cytidylyltransferase (246 aa).

It belongs to the KdsB family.

It is found in the cytoplasm. The enzyme catalyses 3-deoxy-alpha-D-manno-oct-2-ulosonate + CTP = CMP-3-deoxy-beta-D-manno-octulosonate + diphosphate. It participates in nucleotide-sugar biosynthesis; CMP-3-deoxy-D-manno-octulosonate biosynthesis; CMP-3-deoxy-D-manno-octulosonate from 3-deoxy-D-manno-octulosonate and CTP: step 1/1. It functions in the pathway bacterial outer membrane biogenesis; lipopolysaccharide biosynthesis. Functionally, activates KDO (a required 8-carbon sugar) for incorporation into bacterial lipopolysaccharide in Gram-negative bacteria. In Rickettsia conorii (strain ATCC VR-613 / Malish 7), this protein is 3-deoxy-manno-octulosonate cytidylyltransferase.